We begin with the raw amino-acid sequence, 274 residues long: MTEEPLSAAWLTERTIYLLTLLREKRPLVHNITNLVVTNTTANALLALGASPAMVEGVEEVDSFARMADSLVINLGTMSSPRAAAMRLAMAAARQAGKPVVLDPVAVGALRYRTELARDLLEAKPHIVRGNASEIIALAGDGGGGRGVDSLVSSTAALEAASILARRTGGAVAVTGATDYVTDGTRLIGIANGHPMMTRVTGLGCTATALIGAFAAVEPDPLVAACAGLCATGLAGELAAIRADGPGSLQVEFLDALYALDSAILRDAARWVLP.

Residue Met54 participates in substrate binding. The ATP site is built by Arg129 and Thr175. Position 202 (Gly202) interacts with substrate.

The protein belongs to the Thz kinase family. Requires Mg(2+) as cofactor.

It catalyses the reaction 5-(2-hydroxyethyl)-4-methylthiazole + ATP = 4-methyl-5-(2-phosphooxyethyl)-thiazole + ADP + H(+). Its pathway is cofactor biosynthesis; thiamine diphosphate biosynthesis; 4-methyl-5-(2-phosphoethyl)-thiazole from 5-(2-hydroxyethyl)-4-methylthiazole: step 1/1. Functionally, catalyzes the phosphorylation of the hydroxyl group of 4-methyl-5-beta-hydroxyethylthiazole (THZ). In Granulibacter bethesdensis (strain ATCC BAA-1260 / CGDNIH1), this protein is Hydroxyethylthiazole kinase.